The sequence spans 255 residues: Small ribosomal subunit protein eS1 (255 aa).

An N-acetylalanine; partial modification is found at Ala2.

Belongs to the eukaryotic ribosomal protein eS1 family. Component of the small ribosomal subunit. Mature ribosomes consist of a small (40S) and a large (60S) subunit. The 40S subunit contains about 33 different proteins and 1 molecule of RNA (18S). The 60S subunit contains about 49 different proteins and 3 molecules of RNA (25S, 5.8S and 5S).

The protein localises to the cytoplasm. The polypeptide is Small ribosomal subunit protein eS1 (Kluyveromyces lactis (strain ATCC 8585 / CBS 2359 / DSM 70799 / NBRC 1267 / NRRL Y-1140 / WM37) (Yeast)).